A 54-amino-acid polypeptide reads, in one-letter code: MARNEIRPLVKLRSTAGTGYTYITRKNRRNDPDRLVLRKYDPVIRRHVEFREER.

Belongs to the bacterial ribosomal protein bL33 family.

This chain is Large ribosomal subunit protein bL33A, found in Mycolicibacterium paratuberculosis (strain ATCC BAA-968 / K-10) (Mycobacterium paratuberculosis).